The following is a 106-amino-acid chain: Cell division protein FtsB (106 aa).

Over 1–3 (MGK) the chain is Cytoplasmic. A helical membrane pass occupies residues 4 to 21 (LTLLLLVLLGWLQYSLWL). Over 22 to 106 (GKNGIHDFVR…GTPSTQNNAQ (85 aa)) the chain is Periplasmic. The stretch at 31–62 (RVKEDVAAQEANNSTLKARNDQLFAEIDDLNG) forms a coiled coil.

The protein belongs to the FtsB family. As to quaternary structure, part of a complex composed of FtsB, FtsL and FtsQ.

The protein resides in the cell inner membrane. Functionally, essential cell division protein. May link together the upstream cell division proteins, which are predominantly cytoplasmic, with the downstream cell division proteins, which are predominantly periplasmic. The polypeptide is Cell division protein FtsB (Yersinia pseudotuberculosis serotype O:1b (strain IP 31758)).